Reading from the N-terminus, the 198-residue chain is Peroxiredoxin-2 (198 aa).

The residue at position 2 (Ala-2) is an N-acetylalanine. In terms of domain architecture, Thioredoxin spans 6 to 164 (AQIGKSAPDF…ALRLVQAFQY (159 aa)). Ser-11 carries the phosphoserine modification. Cys-51 acts as the Cysteine sulfenic acid (-SOH) intermediate in catalysis. Ser-112 carries the post-translational modification Phosphoserine. Thr-182 bears the Phosphothreonine mark. An N6-acetyllysine modification is found at Lys-196.

It belongs to the peroxiredoxin family. AhpC/Prx1 subfamily. As to quaternary structure, homodimer; disulfide-linked, upon oxidation. 5 homodimers assemble to form a ring-like decamer. Interacts with TIPIN. In terms of processing, the enzyme can be inactivated by further oxidation of the cysteine sulfenic acid (C(P)-SOH) to sulphinic acid (C(P)-SO2H) instead of its condensation to a disulfide bond. It can be reactivated by forming a transient disulfide bond with sulfiredoxin SRXN1, which reduces the cysteine sulfinic acid in an ATP- and Mg-dependent manner. Acetylation increases resistance to transition to high molecular-mass complexes. Deacetylated by HDAC6 which decreases reducing activity. In terms of tissue distribution, widely expressed with highest levels in bone marrow. High levels also found in heart, brain, kidney and skeletal muscle. Lower levels in liver, lung and thymus.

The protein resides in the cytoplasm. The enzyme catalyses a hydroperoxide + [thioredoxin]-dithiol = an alcohol + [thioredoxin]-disulfide + H2O. Its function is as follows. Thiol-specific peroxidase that catalyzes the reduction of hydrogen peroxide and organic hydroperoxides to water and alcohols, respectively. Plays a role in cell protection against oxidative stress by detoxifying peroxides and as sensor of hydrogen peroxide-mediated signaling events. Might participate in the signaling cascades of growth factors and tumor necrosis factor-alpha by regulating the intracellular concentrations of H(2)O(2). The polypeptide is Peroxiredoxin-2 (Prdx2) (Mus musculus (Mouse)).